Consider the following 201-residue polypeptide: Large ribosomal subunit protein bL25 (201 aa).

The protein belongs to the bacterial ribosomal protein bL25 family. CTC subfamily. Part of the 50S ribosomal subunit; part of the 5S rRNA/L5/L18/L25 subcomplex. Contacts the 5S rRNA. Binds to the 5S rRNA independently of L5 and L18.

Functionally, this is one of the proteins that binds to the 5S RNA in the ribosome where it forms part of the central protuberance. This Aromatoleum aromaticum (strain DSM 19018 / LMG 30748 / EbN1) (Azoarcus sp. (strain EbN1)) protein is Large ribosomal subunit protein bL25.